Here is a 451-residue protein sequence, read N- to C-terminus: Phosphoglucosamine mutase (451 aa).

Ser103 functions as the Phosphoserine intermediate in the catalytic mechanism. Residues Ser103, Asp243, Asp245, and Asp247 each coordinate Mg(2+). The residue at position 103 (Ser103) is a Phosphoserine.

It belongs to the phosphohexose mutase family. Mg(2+) serves as cofactor. Activated by phosphorylation.

It catalyses the reaction alpha-D-glucosamine 1-phosphate = D-glucosamine 6-phosphate. In terms of biological role, catalyzes the conversion of glucosamine-6-phosphate to glucosamine-1-phosphate. In Lactiplantibacillus plantarum (strain ATCC BAA-793 / NCIMB 8826 / WCFS1) (Lactobacillus plantarum), this protein is Phosphoglucosamine mutase.